Here is a 169-residue protein sequence, read N- to C-terminus: Myosin regulatory light chain 11 (169 aa).

N,N,N-trimethylalanine is present on alanine 2. Serine 15 and serine 16 each carry phosphoserine. Threonine 25 and threonine 35 each carry phosphothreonine. An EF-hand 1 domain is found at 25-60 (TQIQEFKEAFTVIDQNRDGIIDKEDLRDTFAAMGRL). Positions 38, 40, 42, and 49 each coordinate Ca(2+). Serine 75 is subject to Phosphoserine. 2 consecutive EF-hand domains span residues 95–130 (DPED…QCDR) and 131–166 (FSQE…GDAK). Threonine 101 bears the Phosphothreonine mark.

In terms of assembly, myosin is a hexamer of 2 heavy chains and 4 light chains.

Its function is as follows. Myosin regulatory subunit that plays an essential to maintain muscle integrity during early development. Plays a role in muscle contraction. The polypeptide is Myosin regulatory light chain 11 (Myl11) (Rattus norvegicus (Rat)).